The sequence spans 797 residues: Phenylalanine--tRNA ligase beta subunit (797 aa).

Residues 40–154 (MEGLSKLVVG…ADAKVGDSIF (115 aa)) enclose the tRNA-binding domain. The 76-residue stretch at 407 to 482 (PILPKVSITL…RIYGYDNLPS (76 aa)) folds into the B5 domain. Positions 460, 466, 469, and 470 each coordinate Mg(2+). Residues 704–797 (PKVQAVHRDI…LVEKLDIEIR (94 aa)) enclose the FDX-ACB domain.

It belongs to the phenylalanyl-tRNA synthetase beta subunit family. Type 1 subfamily. Tetramer of two alpha and two beta subunits. It depends on Mg(2+) as a cofactor.

The protein resides in the cytoplasm. The enzyme catalyses tRNA(Phe) + L-phenylalanine + ATP = L-phenylalanyl-tRNA(Phe) + AMP + diphosphate + H(+). The polypeptide is Phenylalanine--tRNA ligase beta subunit (Lactococcus lactis subsp. lactis (strain IL1403) (Streptococcus lactis)).